An 807-amino-acid polypeptide reads, in one-letter code: Leucine-rich repeat-containing protein 41 (807 aa).

Positions 45–54 (ALFELCGRAV) are interaction with Elongin BC complex. Residues Ser-155, Ser-276, and Ser-326 each carry the phosphoserine modification. Disordered regions lie at residues 269–290 (ASRG…RRPR), 304–335 (TRRK…AIGG), and 349–403 (ASGT…GSGA). Thr-327 bears the Phosphothreonine mark. Low complexity predominate over residues 352 to 381 (TKQPSAPAAASASSSTSSKRAPASSASQPK). Residue Ser-368 is modified to Phosphoserine. Basic residues predominate over residues 382 to 396 (PLKRFKRAAGKKGPR). 7 LRR repeats span residues 482–502 (WVSL…IFRL), 513–525 (AGCR…LSDL), 526–550 (FSPL…VLSI), 608–632 (SGSL…LVLQ), 638–661 (NLSL…VLFL), 696–723 (NSTL…VFSE), and 726–747 (SSSL…LLEF).

Part of an E3 ubiquitin-protein ligase complex with Elongin BC (ELOB and ELOC), RBX1 and CUL5. Component of a probable ECS(LRRC41) complex which contains CUL5, RNF7/RBX2, Elongin BC and LRRC41. Interacts with CUL5, RNF7, ELOB and ELOC.

It participates in protein modification; protein ubiquitination. Its function is as follows. Probable substrate recognition component of an ECS (Elongin BC-CUL2/5-SOCS-box protein) E3 ubiquitin ligase complex which mediates the ubiquitination and subsequent proteasomal degradation of target proteins. This Mus musculus (Mouse) protein is Leucine-rich repeat-containing protein 41 (Lrrc41).